A 394-amino-acid chain; its full sequence is Protein maelstrom (394 aa).

Residues 2–69 (APKKQNGFMM…ARRDKRGSLN (68 aa)) constitute a DNA-binding region (HMG box). Residues 44-93 (TQQRGPYNSDAKDANAARRDKRGSLNGHGQVDKAQREAAESLMDKAQREA) are disordered. Residues 73–93 (QVDKAQREAAESLMDKAQREA) show a composition bias toward basic and acidic residues.

Belongs to the maelstrom family.

The protein localises to the cytoplasm. Its subcellular location is the nucleus. Functionally, involved both in the piRNA and miRNA metabolic processes. As a component of the meiotic nuage, plays a central role during oogenesis by repressing transposable elements and preventing their mobilization, which is essential for the germline integrity. Repression of transposable elements is mediated via the piRNA metabolic process, which mediates the repression of transposable elements during meiosis by forming complexes composed of piRNAs and Piwi proteins and governs the repression of transposons. As a nuclear component, it is required for proper differentiation in the germline stem cell (GSC) lineage by repressing microRNA-7 (miR-7), thereby acting as an indirect regulator of bag-of-marbles (Bam). Acts by binding to the promoter of miR-7 gene and repressing its expression; miR-7 repression alleviates the Bam repression by miR-7, thereby allowing differentiation in the germline stem cell (GSC) lineage. The sequence is that of Protein maelstrom (mael) from Drosophila sechellia (Fruit fly).